Reading from the N-terminus, the 141-residue chain is Nucleoside diphosphate kinase (141 aa).

ATP-binding residues include K11, F59, R87, T93, R104, and N114. H117 (pros-phosphohistidine intermediate) is an active-site residue.

This sequence belongs to the NDK family. In terms of assembly, homotetramer. It depends on Mg(2+) as a cofactor.

Its subcellular location is the cytoplasm. It catalyses the reaction a 2'-deoxyribonucleoside 5'-diphosphate + ATP = a 2'-deoxyribonucleoside 5'-triphosphate + ADP. The enzyme catalyses a ribonucleoside 5'-diphosphate + ATP = a ribonucleoside 5'-triphosphate + ADP. In terms of biological role, major role in the synthesis of nucleoside triphosphates other than ATP. The ATP gamma phosphate is transferred to the NDP beta phosphate via a ping-pong mechanism, using a phosphorylated active-site intermediate. The polypeptide is Nucleoside diphosphate kinase (Cupriavidus necator (strain ATCC 17699 / DSM 428 / KCTC 22496 / NCIMB 10442 / H16 / Stanier 337) (Ralstonia eutropha)).